The sequence spans 350 residues: Ribosomal RNA large subunit methyltransferase Cfr (350 aa).

Residue E92 is the Proton acceptor of the active site. Positions 99–333 (EAGWESFCIS…VTIRSQFGRE (235 aa)) constitute a Radical SAM core domain. C106 and C338 are oxidised to a cystine. 3 residues coordinate [4Fe-4S] cluster: C113, C117, and C120. S-adenosyl-L-methionine contacts are provided by residues 159–160 (GE), S190, 213–215 (SLH), and N293. C338 functions as the S-methylcysteine intermediate in the catalytic mechanism.

Belongs to the radical SAM superfamily. RlmN family. Cfr subfamily. It depends on [4Fe-4S] cluster as a cofactor.

The protein resides in the cytoplasm. The catalysed reaction is adenosine(2503) in 23S rRNA + 2 reduced [2Fe-2S]-[ferredoxin] + 2 S-adenosyl-L-methionine = 8-methyladenosine(2503) in 23S rRNA + 5'-deoxyadenosine + L-methionine + 2 oxidized [2Fe-2S]-[ferredoxin] + S-adenosyl-L-homocysteine. Specifically methylates position 8 of adenine 2503 in 23S rRNA. Confers resistance to some classes of antibiotics. This is Ribosomal RNA large subunit methyltransferase Cfr from Shouchella clausii (strain KSM-K16) (Alkalihalobacillus clausii).